We begin with the raw amino-acid sequence, 472 residues long: MSRRGKIVCTLGPATNSDELILALVEAGMDVARLNFSHGDYADHKAAYERVRVASDATGRAVGVLADLQGPKIRLGRFATGPTYWADGETVRITVADCEGSHDRVSTTYKKLAEDAAVGDRVLVDDGKVCLVVDGIEGDDVICTVVEGGPVSNNKGISLPGMNVSAPALSEKDIEDLTFALDLGVDLVALSFVRSPADVELVHEVMDRVGRRVPVIAKLEKPEAVDNLETIVLAFDAIMVARGDLGVELPLEEVPLVQKRAIQMARENAKPVIVATQMLDSMIENSRPTRAEASDVANAVLDGADAVMLSGETSVGKYPMAAVRTMSRIICAVEDNSTAAPPLTHVPRTKRGVISYAARDIGERLDAKALVAFTQSGDTVKRLARLHTPLPLLAFTAWPEVRSQLAMTWGTETFIVPMMTSTGGMIRQVDKSLLELGRYKRGDLVVIVAGAPPGTVGSTNLIHVHRIGEDDV.

R33 is a binding site for substrate. Positions 35, 37, and 67 each coordinate K(+). 35-38 (NFSH) is a binding site for ATP. Positions 74 and 155 each coordinate ATP. E220 provides a ligand contact to Mg(2+). Positions 243, 244, and 276 each coordinate substrate. D244 serves as a coordination point for Mg(2+).

The protein belongs to the pyruvate kinase family. Homotetramer. Mg(2+) serves as cofactor. K(+) is required as a cofactor.

The catalysed reaction is pyruvate + ATP = phosphoenolpyruvate + ADP + H(+). Its pathway is carbohydrate degradation; glycolysis; pyruvate from D-glyceraldehyde 3-phosphate: step 5/5. This chain is Pyruvate kinase (pyk), found in Mycobacterium intracellulare.